We begin with the raw amino-acid sequence, 409 residues long: Peptidase T (409 aa).

His-78 serves as a coordination point for Zn(2+). The active site involves Asp-80. Asp-140 contributes to the Zn(2+) binding site. The active-site Proton acceptor is the Glu-174. Glu-175, Asp-197, and His-379 together coordinate Zn(2+).

This sequence belongs to the peptidase M20B family. It depends on Zn(2+) as a cofactor.

The protein localises to the cytoplasm. It carries out the reaction Release of the N-terminal residue from a tripeptide.. Its function is as follows. Cleaves the N-terminal amino acid of tripeptides. In Aliivibrio fischeri (strain ATCC 700601 / ES114) (Vibrio fischeri), this protein is Peptidase T.